Consider the following 421-residue polypeptide: ATP-dependent RNA helicase RhlB (421 aa).

A Q motif motif is present at residues 9–37; it reads QKFSDFALHPKVVEALEKKGFHNCTPIQA. The region spanning 40–219 is the Helicase ATP-binding domain; that stretch reads LPLTLAGRDV…FEQMNNAEYI (180 aa). 53–60 provides a ligand contact to ATP; the sequence is AQTGTGKT. The short motif at 165 to 168 is the DEAD box element; sequence DEAD. A Helicase C-terminal domain is found at 245–390; it reads RLLQTLIEEE…VSKYNPDALM (146 aa). Positions 395–421 are disordered; sequence KPLRLTRARTGNGPRRTGAPRNRRRSG. A compositionally biased stretch (low complexity) spans 402–414; sequence ARTGNGPRRTGAP.

This sequence belongs to the DEAD box helicase family. RhlB subfamily. Component of the RNA degradosome, which is a multiprotein complex involved in RNA processing and mRNA degradation.

The protein localises to the cytoplasm. It carries out the reaction ATP + H2O = ADP + phosphate + H(+). DEAD-box RNA helicase involved in RNA degradation. Has RNA-dependent ATPase activity and unwinds double-stranded RNA. The sequence is that of ATP-dependent RNA helicase RhlB from Shigella flexneri serotype 5b (strain 8401).